The following is a 92-amino-acid chain: Long neurotoxin 469 (92 aa).

An N-terminal signal peptide occupies residues 1–21 (MKTLLLTLVVVTIVCLDLGDS). Cystine bridges form between Cys-24/Cys-41, Cys-34/Cys-62, Cys-47/Cys-51, Cys-66/Cys-77, and Cys-78/Cys-83.

It belongs to the three-finger toxin family. Long-chain subfamily. Type II alpha-neurotoxin sub-subfamily. Expressed by the venom gland.

Its subcellular location is the secreted. Binds with high affinity to muscular (alpha-1/CHRNA1) and neuronal (alpha-7/CHRNA7) nicotinic acetylcholine receptor (nAChR) and inhibits acetylcholine from binding to the receptor, thereby impairing neuromuscular and neuronal transmission. This is Long neurotoxin 469 from Drysdalia coronoides (White-lipped snake).